The following is a 150-amino-acid chain: MNKTSLPPIDSIDRQWYVVDAENQTLGRLATEVAAVLRGKTNPSFTPHLDTGDFVVVVNAEKIKVSGRKPQQKLYRRHSGRPGGMKVETFEALQERIPERIVEKAIKGMLPHNALGRQMFRKLKVYKGTEHPHAAQKPQPLQLNPSASAQ.

Residues 129-150 (TEHPHAAQKPQPLQLNPSASAQ) are disordered. Residues 139–150 (QPLQLNPSASAQ) show a composition bias toward polar residues.

This sequence belongs to the universal ribosomal protein uL13 family. In terms of assembly, part of the 50S ribosomal subunit.

Its function is as follows. This protein is one of the early assembly proteins of the 50S ribosomal subunit, although it is not seen to bind rRNA by itself. It is important during the early stages of 50S assembly. The sequence is that of Large ribosomal subunit protein uL13 from Synechococcus sp. (strain CC9605).